A 155-amino-acid polypeptide reads, in one-letter code: Myosin light chain alkali (155 aa).

EF-hand domains lie at 7–41 (REVE…LNLN) and 80–115 (GCYE…LGES).

As to quaternary structure, myosin is a hexamer of 2 heavy chains and 4 light chains. In terms of tissue distribution, indirect flight muscle isoform is found only in the indirect flight muscles. The larval and adult isoform is present in the larval and adult musculature.

This is Myosin light chain alkali (Mlc1) from Drosophila melanogaster (Fruit fly).